Reading from the N-terminus, the 320-residue chain is Transcription factor NAI1 (320 aa).

The disordered stretch occupies residues T53–V105. Positions T58–S80 are enriched in low complexity. Over residues Q81–V105 the composition is skewed to polar residues. Positions H128 to L177 constitute a bHLH domain.

As to quaternary structure, homodimer. Expressed constitutively in roots, leaves, stems, and flowers.

The protein localises to the nucleus. Functionally, transcription activator that regulates the expression of at least NAI2, PYK10 and PBP1. Required for and mediates the formation of endoplasmic reticulum bodies (ER bodies). Involved in the symbiotic interactions with the endophytes of the Sebacinaceae fungus family, such as Piriformospora indica and Sebacina. This chain is Transcription factor NAI1 (NAI1), found in Arabidopsis thaliana (Mouse-ear cress).